We begin with the raw amino-acid sequence, 96 residues long: 2Fe-2S ferredoxin-5 (96 aa).

The 95-residue stretch at 2-96 (PKVIVANINA…GKGDVVIYLP (95 aa)) folds into the 2Fe-2S ferredoxin-type domain. [2Fe-2S] cluster is bound by residues Cys-36, Cys-42, Cys-45, and Cys-81.

This sequence belongs to the adrenodoxin/putidaredoxin family. It depends on [2Fe-2S] cluster as a cofactor.

Functionally, may be involved in the assembly of iron-sulfur clusters (Isc-Fd). This is 2Fe-2S ferredoxin-5 (fdx5) from Aquifex aeolicus (strain VF5).